A 318-amino-acid polypeptide reads, in one-letter code: tRNA-modifying protein YgfZ (318 aa).

Residues Trp28 and Trp182 each coordinate folate.

Belongs to the tRNA-modifying YgfZ family.

The protein localises to the cytoplasm. Folate-binding protein involved in regulating the level of ATP-DnaA and in the modification of some tRNAs. It is probably a key factor in regulatory networks that act via tRNA modification, such as initiation of chromosomal replication. The protein is tRNA-modifying protein YgfZ of Aliivibrio fischeri (strain MJ11) (Vibrio fischeri).